Here is a 130-residue protein sequence, read N- to C-terminus: Small ribosomal subunit protein uS9 (130 aa).

The disordered stretch occupies residues 105 to 130; that stretch reads TRDARMKERKKPGLKKARKASQFSKR. Basic residues predominate over residues 111–130; it reads KERKKPGLKKARKASQFSKR.

It belongs to the universal ribosomal protein uS9 family.

The sequence is that of Small ribosomal subunit protein uS9 from Lactiplantibacillus plantarum (strain ATCC BAA-793 / NCIMB 8826 / WCFS1) (Lactobacillus plantarum).